A 258-amino-acid chain; its full sequence is RIO-type serine/threonine-protein kinase Rio1 (258 aa).

Positions 49-258 (TAMGGVISTG…EEMLKEVKGE (210 aa)) constitute a Protein kinase domain. ATP contacts are provided by residues 55-63 (ISTGKEANV) and lysine 80. Serine 108 bears the Phosphoserine; by autocatalysis mark. ATP is bound by residues glutamate 148 and isoleucine 150. The active-site Proton acceptor is the aspartate 196. ATP-binding residues include tyrosine 200, asparagine 201, and aspartate 212. Residues asparagine 201 and aspartate 212 each coordinate Mg(2+). Aspartate 212 (4-aspartylphosphate intermediate) is an active-site residue.

It belongs to the protein kinase superfamily. RIO-type Ser/Thr kinase family. Requires Mg(2+) as cofactor.

The enzyme catalyses L-seryl-[protein] + ATP = O-phospho-L-seryl-[protein] + ADP + H(+). The catalysed reaction is L-threonyl-[protein] + ATP = O-phospho-L-threonyl-[protein] + ADP + H(+). In terms of biological role, autophosphorylation of the rio1 protein is not necessary for maintenance of kinase activity. Prefers ATP over GTP. The yeast ortholog is involved in ribosome biogenesis. Despite the protein kinase domain is proposed to act predominantly as an ATPase. The polypeptide is RIO-type serine/threonine-protein kinase Rio1 (rio1) (Archaeoglobus fulgidus (strain ATCC 49558 / DSM 4304 / JCM 9628 / NBRC 100126 / VC-16)).